A 558-amino-acid chain; its full sequence is 2-hydroxy-7-methoxy-5-methyl-1-naphthoate--CoA ligase (558 aa).

Residues 212 to 213 (GG), 329 to 331 (ASR), Val351, Asp435, Arg450, and Lys542 contribute to the ATP site.

Belongs to the ATP-dependent AMP-binding enzyme family.

The catalysed reaction is 2-hydroxy-7-methoxy-5-methyl-1-naphthoate + ATP + CoA = 2-hydroxy-7-methoxy-5-methyl-1-naphthoyl-CoA + AMP + diphosphate. It functions in the pathway antibiotic biosynthesis. In terms of biological role, catalyzes the activation of 2-hydroxy-7-methoxy-5-methyl-1-naphthoate in the biosynthesis of the naphthoate moiety of the neocarzinostatin chromophore. Also catalyzes the activation of other 1-naphthoic acid analogs such as 2-hydroxy-5-methyl-1-naphthoate or 2,7-dihydroxy-5-methyl-1-naphthoate in vitro. In Streptomyces carzinostaticus, this protein is 2-hydroxy-7-methoxy-5-methyl-1-naphthoate--CoA ligase.